Here is a 325-residue protein sequence, read N- to C-terminus: Protein SAR DEFICIENT 4 (325 aa).

The transit peptide at 1-42 (MAALPVFIPAESFPSILSHETLINHFRTNLPKHSSTITSPVR) directs the protein to the chloroplast.

Belongs to the ornithine cyclodeaminase/mu-crystallin family.

The protein localises to the plastid. The protein resides in the chloroplast. Its function is as follows. Involved in the biosynthesis of pipecolate (Pip), a metabolite that orchestrates defense amplification, positive regulation of salicylic acid (SA) biosynthesis, and priming to guarantee effective local resistance induction and the establishment of systemic acquired resistance (SAR). Converts delta-(1)-piperideine-2-carboxylate (P2C) to Pip. Mediates reduction of P2C and biosynthesis of Pip in systemic tissue and contributes to SAR establishment. Does not possess ornithine cyclodeaminase activity in vitro. The polypeptide is Protein SAR DEFICIENT 4 (Arabidopsis thaliana (Mouse-ear cress)).